The following is a 382-amino-acid chain: Prolargin (382 aa).

Residues 1–20 form the signal peptide; it reads MRSPLCWLLPLLILASVAQG. The interval 19–66 is disordered; the sequence is QGQPTRRPRPGTGPGRRPRPRPRPTPSFPQPDEPAEPTDLPPPLPPGP. 2 stretches are compositionally biased toward pro residues: residues 41-50 and 57-66; these read RPTPSFPQPD and DLPPPLPPGP. 12 LRR repeats span residues 95–114, 115–138, 139–162, 163–183, 184–207, 208–233, 234–254, 255–278, 279–303, 304–323, 324–362, and 363–382; these read RKVP…NNFI, TELP…NNRI, RKID…KNQL, EEVP…QNHI, SRIP…HNRL, SDGV…HNIL, RKMP…SNKI, ETIP…YNKL, TDRG…HNRI, SSVP…NNSI, EKIN…GNYL, and KPPI…SVVI. Asn124 carries an N-linked (GlcNAc...) asparagine glycan. N-linked (GlcNAc...) asparagine glycosylation is found at Asn289, Asn320, and Asn327. A disulfide bridge connects residues Cys332 and Cys373.

Belongs to the small leucine-rich proteoglycan (SLRP) family. SLRP class II subfamily. In terms of assembly, binds the basement membrane heparan sulfate proteoglycan perlecan and triple helical collagens type I and type II. Glycosylated; contains heparan sulfate. Connective tissue.

The protein resides in the secreted. It localises to the extracellular space. Its subcellular location is the extracellular matrix. Its function is as follows. May anchor basement membranes to the underlying connective tissue. The chain is Prolargin (PRELP) from Homo sapiens (Human).